The primary structure comprises 533 residues: Adenylate kinase 7 (533 aa).

The tract at residues Pro-177–Glu-426 is adenylate kinase. Position 187-192 (Ala-187–Ser-192) interacts with ATP. An NMP region spans residues Gln-207 to Leu-265. Residues Glu-242–Leu-265, Gly-292–Lys-295, and Gln-299 each bind AMP. Residues Asn-347–His-357 form an LID region. Residue Arg-365 participates in AMP binding. Gly-397 lines the ATP pocket. Residues Arg-419–Ser-487 are a coiled coil. The tract at residues Pro-489–Gln-533 is DPY-30.

The protein in the central section; belongs to the adenylate kinase family. This sequence in the C-terminal section; belongs to the dpy-30 family.

The protein localises to the cytoplasm. It localises to the cytosol. The protein resides in the cell projection. It is found in the cilium. Its subcellular location is the flagellum. It catalyses the reaction AMP + ATP = 2 ADP. The catalysed reaction is a 2'-deoxyribonucleoside 5'-diphosphate + ATP = a 2'-deoxyribonucleoside 5'-triphosphate + ADP. The enzyme catalyses a ribonucleoside 5'-diphosphate + ATP = a ribonucleoside 5'-triphosphate + ADP. Its function is as follows. Nucleoside monophosphate (NMP) kinase that catalyzes the reversible transfer of the terminal phosphate group between nucleoside triphosphates and monophosphates. Has highest activity toward AMP, and weaker activity toward dAMP, CMP and dCMP. Also displays broad nucleoside diphosphate kinase activity. Involved in maintaining ciliary structure and function. The sequence is that of Adenylate kinase 7 (AK7) from Macaca fascicularis (Crab-eating macaque).